A 366-amino-acid polypeptide reads, in one-letter code: MGLLEVLDPEDLPKMSTWYALVPRGEGPSARVGHTCMYVSSSEDSSKGKILILGGADPSGCYSDTHIIDLDNHEWDNPDSEGLLPRYEHASFISASNPGNIWVFAGAEQAENRNCVQVLNPGAASWKSPKVMGTPPSPRTFHTSSAAIEDKLYVFGGGEKGAEPVADTNLYIYDAATMTWTQPVTSGDPPQARHGHVLTALGTKLFVHGGMAGSTFFKDMFCIDTDTMKWERLKTKGDLPPACAAHSSVAWKSYIYIFGGMTSTGATNSMYRYNTETLLWKQLKFDSACPPARLDHSMCLLPWKTRTNTDNAEKLPCKAKEESNLKECSSATSKTLEQGIVHLCFIFGGMDTDGELHSDCCVTILQ.

6 Kelch repeats span residues 49 to 95 (KILI…FISA), 100 to 146 (NIWV…TSSA), 151 to 200 (KLYV…VLTA), 204 to 253 (KLFV…AWKS), 254 to 303 (YIYI…LLPW), and 343 to 366 (LCFI…TILQ).

Its function is as follows. Rab9 effector required for endosome to trans-Golgi network (TGN) transport. This is Rab9 effector protein with kelch motifs (rabepk) from Xenopus laevis (African clawed frog).